Consider the following 172-residue polypeptide: Ribosome maturation factor RimM (172 aa).

Residues 96–168 (DGEFYYHEII…RIDVTVLEGL (73 aa)) enclose the PRC barrel domain.

The protein belongs to the RimM family. Binds ribosomal protein uS19.

It localises to the cytoplasm. Its function is as follows. An accessory protein needed during the final step in the assembly of 30S ribosomal subunit, possibly for assembly of the head region. Essential for efficient processing of 16S rRNA. May be needed both before and after RbfA during the maturation of 16S rRNA. It has affinity for free ribosomal 30S subunits but not for 70S ribosomes. This Streptococcus mutans serotype c (strain ATCC 700610 / UA159) protein is Ribosome maturation factor RimM.